The sequence spans 483 residues: Dual specificity protein phosphatase 10 (483 aa).

The Rhodanese domain maps to 169 to 286; sequence PSQGPVIIDC…FKQNHGNLCD (118 aa). The interaction with MAP kinases stretch occupies residues 200 to 216; the sequence is KISRRRLQQGKITVLDL. One can recognise a Tyrosine-protein phosphatase domain in the interval 322 to 465; it reads ELTPILPFLF…LLEFEEDLNN (144 aa). The active-site Phosphocysteine intermediate is cysteine 409.

It belongs to the protein-tyrosine phosphatase family. Non-receptor class dual specificity subfamily. Monomer. Interacts with MAPK14.

The protein resides in the cytoplasm. The protein localises to the nucleus. It catalyses the reaction O-phospho-L-tyrosyl-[protein] + H2O = L-tyrosyl-[protein] + phosphate. The catalysed reaction is O-phospho-L-seryl-[protein] + H2O = L-seryl-[protein] + phosphate. The enzyme catalyses O-phospho-L-threonyl-[protein] + H2O = L-threonyl-[protein] + phosphate. Protein phosphatase involved in the inactivation of MAP kinases. Has a specificity for the MAPK11/MAPK12/MAPK13/MAPK14 subfamily. It preferably dephosphorylates p38. In Mus musculus (Mouse), this protein is Dual specificity protein phosphatase 10 (Dusp10).